The sequence spans 190 residues: MKLAYFSSLLPLALAAPASVVDPREPKEDITDRYLFSTPLPTFLEYREKENPDSLDWTSDGCTHASNNPFGFPFEPACQRHDFGYRNYQAQTRFESDSRYRIDLNFYNDMIFQCTDVSALRSCHGLADVYYAGVRMFGGFAKRDEMGAVVASATDPKESAEDLIAVYYTALQEYHQAVKADQADGLLPRL.

A signal peptide spans 1–15 (MKLAYFSSLLPLALA). C62 and C78 are disulfide-bonded. A65 is a binding site for Ca(2+). The active site involves H81. D82 contributes to the Ca(2+) binding site.

The protein belongs to the phospholipase A2 family. It depends on Ca(2+) as a cofactor.

Its subcellular location is the lipid droplet. It is found in the secreted. It carries out the reaction a 1,2-diacyl-sn-glycero-3-phosphocholine + H2O = a 1-acyl-sn-glycero-3-phosphocholine + a fatty acid + H(+). In terms of biological role, secretory phospholipase that catalyzes the calcium-dependent hydrolysis of the 2-acyl groups in 3-sn-phosphoglycerides. Increases the ability to utilize insect-derived nutrients and lipids, and promotes lipid dropplets accumulation. Plays a role in virulence, including more efficient penetration of the insect cuticle and evasion of host immune response by repressing the expression of host immunity genes. The polypeptide is Secretory phospholipase A2 (Beauveria bassiana (strain ARSEF 2860) (White muscardine disease fungus)).